Reading from the N-terminus, the 250-residue chain is UPF0736 protein BLi01230/BL03322 (250 aa).

It belongs to the UPF0736 family.

In Bacillus licheniformis (strain ATCC 14580 / DSM 13 / JCM 2505 / CCUG 7422 / NBRC 12200 / NCIMB 9375 / NCTC 10341 / NRRL NRS-1264 / Gibson 46), this protein is UPF0736 protein BLi01230/BL03322.